The following is a 167-amino-acid chain: ATP synthase subunit b (167 aa).

A helical membrane pass occupies residues 10–30 (TFFFQLANTLIMFLILKHFLF).

The protein belongs to the ATPase B chain family. As to quaternary structure, F-type ATPases have 2 components, F(1) - the catalytic core - and F(0) - the membrane proton channel. F(1) has five subunits: alpha(3), beta(3), gamma(1), delta(1), epsilon(1). F(0) has three main subunits: a(1), b(2) and c(10-14). The alpha and beta chains form an alternating ring which encloses part of the gamma chain. F(1) is attached to F(0) by a central stalk formed by the gamma and epsilon chains, while a peripheral stalk is formed by the delta and b chains.

Its subcellular location is the cell membrane. F(1)F(0) ATP synthase produces ATP from ADP in the presence of a proton or sodium gradient. F-type ATPases consist of two structural domains, F(1) containing the extramembraneous catalytic core and F(0) containing the membrane proton channel, linked together by a central stalk and a peripheral stalk. During catalysis, ATP synthesis in the catalytic domain of F(1) is coupled via a rotary mechanism of the central stalk subunits to proton translocation. Functionally, component of the F(0) channel, it forms part of the peripheral stalk, linking F(1) to F(0). This is ATP synthase subunit b from Alkaliphilus oremlandii (strain OhILAs) (Clostridium oremlandii (strain OhILAs)).